The sequence spans 698 residues: Probable xyloglucan glycosyltransferase 2 (698 aa).

Transmembrane regions (helical) follow at residues 124 to 144 (GFLA…WNGW) and 190 to 210 (ILLF…CFWI). Asp-272 is an active-site residue. Positions 331 and 333 each coordinate substrate. The active site involves Asp-425. The next 4 membrane-spanning stretches (helical) occupy residues 503-523 (LILP…TMFV), 528-548 (LPVW…ILPS), 653-668 (LALS…RSLL), and 673-693 (IHFY…LDLI).

Belongs to the glycosyltransferase 2 family. Plant cellulose synthase-like C subfamily.

The protein resides in the golgi apparatus membrane. In terms of biological role, probable beta-1,4-glucan synthase rather involved in the synthesis of the xyloglucan backbone than cellulose. Seems to work simultaneously with xyloglucan 6-xylosyltransferase. Xyloglucan is a noncellulosic polysaccharides of plant cell wall and consists of a glucan backbone substituted by xylose, galactose and fucose. In Oryza sativa subsp. indica (Rice), this protein is Probable xyloglucan glycosyltransferase 2 (CSLC2).